Here is a 758-residue protein sequence, read N- to C-terminus: ATP-dependent RNA helicase dbp7 (758 aa).

Disordered regions lie at residues 28 to 98 and 110 to 130; these read TWRD…NQPR and EPQK…KPTN. Residues 35–45 show a composition bias toward basic residues; sequence AKKIAKHHAKG. Over residues 84-98 the composition is skewed to polar residues; the sequence is GKQQSHGHPHSNQPR. Basic and acidic residues predominate over residues 110–125; it reads EPQKAEEVKEEGHVEN. The Q motif signature appears at 138–167; it reads DTFTNLGLSPNLAAHLLTKLELKAPTAIQK. The Helicase ATP-binding domain maps to 171 to 372; it reads SQLLKEEGDA…EISLKDAVHI (202 aa). ATP is bound at residue 184–191; the sequence is AETGSGKT. The short motif at 308 to 311 is the DEAD box element; it reads DEGD. In terms of domain architecture, Helicase C-terminal spans 398-620; that stretch reads QLKQSYAVVA…NVESGNKDWE (223 aa). Basic and acidic residues-rich tracts occupy residues 455–471 and 697–709; these read KEDG…EEKP and GKEE…KAER. Disordered regions lie at residues 455-483 and 697-745; these read KEDG…APAT and GKEE…RAKM.

It belongs to the DEAD box helicase family. DDX31/DBP7 subfamily.

The protein resides in the nucleus. It localises to the nucleolus. It carries out the reaction ATP + H2O = ADP + phosphate + H(+). Its function is as follows. ATP-binding RNA helicase involved in the biogenesis of 60S ribosomal subunits and is required for the normal formation of 25S and 5.8S rRNAs. The chain is ATP-dependent RNA helicase dbp7 (dbp7) from Aspergillus fumigatus (strain ATCC MYA-4609 / CBS 101355 / FGSC A1100 / Af293) (Neosartorya fumigata).